The chain runs to 242 residues: Ribonuclease 3 2 (242 aa).

The RNase III domain maps to 12-137; the sequence is LESLVRKLGL…VLGALYLSTS (126 aa). Glutamate 51 serves as a coordination point for Mg(2+). Aspartate 55 is a catalytic residue. Residues aspartate 123 and glutamate 126 each contribute to the Mg(2+) site. Residue glutamate 126 is part of the active site. The DRBM domain occupies 165-235; it reads NYKAALQEWT…AKVAFLAITP (71 aa).

It belongs to the ribonuclease III family. As to quaternary structure, homodimer. Requires Mg(2+) as cofactor.

The protein resides in the cytoplasm. It carries out the reaction Endonucleolytic cleavage to 5'-phosphomonoester.. Its function is as follows. Digests double-stranded RNA. Involved in the processing of primary rRNA transcript to yield the immediate precursors to the large and small rRNAs (23S and 16S). Processes some mRNAs, and tRNAs when they are encoded in the rRNA operon. Processes pre-crRNA and tracrRNA of type II CRISPR loci if present in the organism. The protein is Ribonuclease 3 2 (rnc2) of Nostoc sp. (strain PCC 7120 / SAG 25.82 / UTEX 2576).